The chain runs to 120 residues: ATP-dependent Clp protease adapter protein ClpS (120 aa).

It belongs to the ClpS family. In terms of assembly, binds to the N-terminal domain of the chaperone ClpA.

Functionally, involved in the modulation of the specificity of the ClpAP-mediated ATP-dependent protein degradation. This Pseudomonas syringae pv. syringae (strain B728a) protein is ATP-dependent Clp protease adapter protein ClpS.